Reading from the N-terminus, the 389-residue chain is Agamous-like MADS-box protein AGL65 (389 aa).

The 61-residue stretch at 1–61 (MGRVKLKIKR…GRATAFHGEH (61 aa)) folds into the MADS-box domain. 2 coiled-coil regions span residues 77–131 (QERT…LMEC) and 293–325 (GMEEDQEKKIKSEMELNNLQQQQQQQQQQQQQD). The disordered stretch occupies residues 310 to 343 (NLQQQQQQQQQQQQQDPSMYDPMANNNGGCFQIP). The span at 312–324 (QQQQQQQQQQQQQ) shows a compositional bias: low complexity.

As to quaternary structure, forms a heterodimer with AGL104. Expressed in pollen.

It localises to the nucleus. In terms of biological role, probable transcription factor that forms a heterodimer with the MADS-box protein AGL104 and is involved in the regulation of pollen maturation at the late stages of pollen development and pollen tube growth. The protein is Agamous-like MADS-box protein AGL65 of Arabidopsis thaliana (Mouse-ear cress).